A 274-amino-acid polypeptide reads, in one-letter code: Cytochrome c oxidase subunit 3 (274 aa).

Topologically, residues A2–S15 are cytoplasmic. Residues I16–M36 form a helical membrane-spanning segment. At K37–G48 the chain is on the periplasmic side. The chain crosses the membrane as a helical span at residues P49–G77. The Cytoplasmic portion of the chain corresponds to E78 to H79. The helical transmembrane segment at T80 to Y115 threads the bilayer. Topologically, residues P116 to W139 are periplasmic. A helical membrane pass occupies residues H140–E166. Over G167 to D168 the chain is Cytoplasmic. The helical transmembrane segment at R169 to A197 threads the bilayer. The Periplasmic segment spans residues A198 to D203. The helical transmembrane segment at T204 to K237 threads the bilayer. At G238–Q244 the chain is on the cytoplasmic side. The helical transmembrane segment at H245 to R274 threads the bilayer.

The protein belongs to the cytochrome c oxidase subunit 3 family.

Its subcellular location is the cell inner membrane. It carries out the reaction 4 Fe(II)-[cytochrome c] + O2 + 8 H(+)(in) = 4 Fe(III)-[cytochrome c] + 2 H2O + 4 H(+)(out). The polypeptide is Cytochrome c oxidase subunit 3 (ctaE) (Paracoccus denitrificans).